The following is a 140-amino-acid chain: uncharacterized protein (140 aa).

Residues Thr4–Gly127 form the VOC domain.

This is an uncharacterized protein from Pseudomonas aeruginosa (strain ATCC 15692 / DSM 22644 / CIP 104116 / JCM 14847 / LMG 12228 / 1C / PRS 101 / PAO1).